An 850-amino-acid chain; its full sequence is AdoMet-dependent rRNA methyltransferase SPB1 (850 aa).

5 residues coordinate S-adenosyl-L-methionine: G58, W60, D78, D94, and D119. Residue K159 is the Proton acceptor of the active site. Residues 273–282 (GETNEMTWTP) show a composition bias toward polar residues. Disordered regions lie at residues 273 to 305 (GETN…ARDE), 388 to 414 (IDKE…NEMK), 529 to 569 (GISD…RTLN), and 620 to 646 (AKKN…KQDD). The segment covering 388 to 400 (IDKELSELGEREK) has biased composition (basic and acidic residues). Residues 397 to 425 (EREKARKKRERRRRNEMKQREIQRMQMNM) are a coiled coil. A compositionally biased stretch (basic residues) spans 401 to 411 (ARKKRERRRRN). Acidic residues-rich tracts occupy residues 537–561 (DESD…DEDD) and 628–638 (SDSEDEEDDIV). A coiled-coil region spans residues 746 to 773 (LEAKGRKKMRALRRLEQMKKKSELINED). Residues 811–850 (KNKGIAGRPRGVTGKYKMVDGTMKKEQRAIRRIKKKMGKK) form a disordered region. Over residues 840–850 (IRRIKKKMGKK) the composition is skewed to basic residues.

It belongs to the class I-like SAM-binding methyltransferase superfamily. RNA methyltransferase RlmE family. SPB1 subfamily. As to quaternary structure, component of the nucleolar and nucleoplasmic pre-60S ribosomal particle.

The protein resides in the nucleus. It localises to the nucleolus. It catalyses the reaction a ribonucleotide in rRNA + S-adenosyl-L-methionine = a 2'-O-methylribonucleotide in rRNA + S-adenosyl-L-homocysteine + H(+). Functionally, required for proper assembly of pre-ribosomal particles during the biogenesis of the 60S ribosomal subunit. The chain is AdoMet-dependent rRNA methyltransferase SPB1 from Yarrowia lipolytica (strain CLIB 122 / E 150) (Yeast).